The sequence spans 711 residues: DNA topoisomerase 3 (711 aa).

The region spanning 2 to 135 (KSLILAEKPS…IRRLWISSVT (134 aa)) is the Toprim domain. Mg(2+) is bound by residues E8 and D104. The Topo IA-type catalytic domain maps to 152–580 (YNDLYYAALA…EMKDFTKDVV (429 aa)). The interaction with DNA stretch occupies residues 186 to 191 (SLGRVQ). The active-site O-(5'-phospho-DNA)-tyrosine intermediate is Y305. Residues 691–711 (MNKNEGLDNNPFKDALKNLNL) form a disordered region.

It belongs to the type IA topoisomerase family. Requires Mg(2+) as cofactor.

It carries out the reaction ATP-independent breakage of single-stranded DNA, followed by passage and rejoining.. Functionally, releases the supercoiling and torsional tension of DNA, which is introduced during the DNA replication and transcription, by transiently cleaving and rejoining one strand of the DNA duplex. Introduces a single-strand break via transesterification at a target site in duplex DNA. The scissile phosphodiester is attacked by the catalytic tyrosine of the enzyme, resulting in the formation of a DNA-(5'-phosphotyrosyl)-enzyme intermediate and the expulsion of a 3'-OH DNA strand. The free DNA strand then undergoes passage around the unbroken strand, thus removing DNA supercoils. Finally, in the religation step, the DNA 3'-OH attacks the covalent intermediate to expel the active-site tyrosine and restore the DNA phosphodiester backbone. This chain is DNA topoisomerase 3, found in Staphylococcus aureus (strain Mu50 / ATCC 700699).